The sequence spans 281 residues: Ribosomal RNA small subunit methyltransferase I (281 aa).

Belongs to the methyltransferase superfamily. RsmI family.

It is found in the cytoplasm. It catalyses the reaction cytidine(1402) in 16S rRNA + S-adenosyl-L-methionine = 2'-O-methylcytidine(1402) in 16S rRNA + S-adenosyl-L-homocysteine + H(+). Catalyzes the 2'-O-methylation of the ribose of cytidine 1402 (C1402) in 16S rRNA. The chain is Ribosomal RNA small subunit methyltransferase I from Erythrobacter litoralis (strain HTCC2594).